The chain runs to 173 residues: Superoxide dismutase [Cu-Zn] 2 (173 aa).

The first 19 residues, 1 to 19, serve as a signal peptide directing secretion; that stretch reads MKRLSLAMVTLLACAGAQA. Cu cation-binding residues include histidine 67, histidine 69, and histidine 92. A disulfide bridge links cysteine 74 with cysteine 169. The Zn(2+) site is built by histidine 92, histidine 101, histidine 109, and aspartate 112. Histidine 147 contacts Cu cation.

Belongs to the Cu-Zn superoxide dismutase family. Monomer. Cu cation serves as cofactor. The cofactor is Zn(2+).

The protein localises to the periplasm. It carries out the reaction 2 superoxide + 2 H(+) = H2O2 + O2. Its function is as follows. Destroys radicals which are normally produced within the cells and which are toxic to biological systems. In Salmonella typhimurium (strain LT2 / SGSC1412 / ATCC 700720), this protein is Superoxide dismutase [Cu-Zn] 2 (sodC).